Consider the following 147-residue polypeptide: F420H(2)-dependent reductase Rv1155 (147 aa).

Coenzyme F420-(gamma-Glu)n is bound by residues glutamine 32, glutamine 37, serine 50, alanine 56–asparagine 60, tryptophan 77–tyrosine 79, and histidine 138.

The protein belongs to the F420H(2)-dependent biliverdin reductase family. As to quaternary structure, homodimer.

Its function is as follows. F420H(2)-dependent reductase able to catalyze the reduction of biliverdin-IXalpha to bilirubin-IXalpha in vitro. However, kinetic parameters show that it is less efficient than the biliverdin reductase Rv2074 and suggest biliverdin-IXalpha is unlikely to be the native substrate of Rv1155, which probably catalyzes the reduction of an alternative molecule in vivo. Binds coenzyme F420, but does not bind FMN or other flavins. Cannot use pyridoxine 5'-phosphate, pyridoxamine 5'-phosphate, pyridoxal 5'-phosphate (PLP), the anti-tuberculosis drug PA-824 or aflatoxin analogs as substrates. This chain is F420H(2)-dependent reductase Rv1155, found in Mycobacterium tuberculosis (strain ATCC 25618 / H37Rv).